The chain runs to 260 residues: Thymidylate synthase (260 aa).

Its pathway is pyrimidine metabolism; dTTP biosynthesis. Is able to catalyze the biosynthesis of dTMP using dUMP, tetrahydrofolate and formaldehyde in vitro, i.e. a reaction equivalent to that catalyzed by bacterial thymidylate synthases (EC 2.1.1.45). However, M.jannaschii like most methanogenic Archaea lacks folates, thus the physiological cosubstrate is unknown but is likely one of the non-methylated methanopterin biosynthetic intermediates. The polypeptide is Thymidylate synthase (Methanocaldococcus jannaschii (strain ATCC 43067 / DSM 2661 / JAL-1 / JCM 10045 / NBRC 100440) (Methanococcus jannaschii)).